The primary structure comprises 247 residues: Adenosylcobinamide-GDP ribazoletransferase (247 aa).

4 consecutive transmembrane segments (helical) span residues 34-54 (IITF…VFMV), 59-79 (CGVP…TGGF), 113-133 (GGLA…ELAL), and 194-214 (VLLP…AIFI).

Belongs to the CobS family. It depends on Mg(2+) as a cofactor.

Its subcellular location is the cell inner membrane. It catalyses the reaction alpha-ribazole + adenosylcob(III)inamide-GDP = adenosylcob(III)alamin + GMP + H(+). It carries out the reaction alpha-ribazole 5'-phosphate + adenosylcob(III)inamide-GDP = adenosylcob(III)alamin 5'-phosphate + GMP + H(+). It participates in cofactor biosynthesis; adenosylcobalamin biosynthesis; adenosylcobalamin from cob(II)yrinate a,c-diamide: step 7/7. Joins adenosylcobinamide-GDP and alpha-ribazole to generate adenosylcobalamin (Ado-cobalamin). Also synthesizes adenosylcobalamin 5'-phosphate from adenosylcobinamide-GDP and alpha-ribazole 5'-phosphate. The protein is Adenosylcobinamide-GDP ribazoletransferase of Escherichia coli (strain ATCC 8739 / DSM 1576 / NBRC 3972 / NCIMB 8545 / WDCM 00012 / Crooks).